A 404-amino-acid chain; its full sequence is Phosphoglycerate kinase (404 aa).

Substrate contacts are provided by residues 26–28 (DFN), arginine 41, 64–67 (HLGR), arginine 124, and arginine 161. ATP contacts are provided by residues lysine 212, glycine 301, glutamate 332, and 359–362 (GGDS).

This sequence belongs to the phosphoglycerate kinase family. In terms of assembly, monomer.

The protein resides in the cytoplasm. The catalysed reaction is (2R)-3-phosphoglycerate + ATP = (2R)-3-phospho-glyceroyl phosphate + ADP. Its pathway is carbohydrate degradation; glycolysis; pyruvate from D-glyceraldehyde 3-phosphate: step 2/5. The chain is Phosphoglycerate kinase from Mesomycoplasma hyopneumoniae (strain 232) (Mycoplasma hyopneumoniae).